The chain runs to 283 residues: Tyrosine recombinase THA_404 (283 aa).

One can recognise a Core-binding (CB) domain in the interval 1 to 86; that stretch reads MDKVIEMFSD…SLNSFFNYLE (86 aa). A Tyr recombinase domain is found at 107 to 281; it reads KIPDFLTEDE…ADQEKFDAVK (175 aa). Residues R145, K170, H233, R236, and H259 contribute to the active site. The active-site O-(3'-phospho-DNA)-tyrosine intermediate is the Y268.

This sequence belongs to the 'phage' integrase family.

It is found in the cytoplasm. Functionally, site-specific tyrosine recombinase, which acts by catalyzing the cutting and rejoining of the recombining DNA molecules. The protein is Tyrosine recombinase THA_404 of Thermosipho africanus (strain TCF52B).